The chain runs to 325 residues: Elongation factor P--(R)-beta-lysine ligase (325 aa).

76–78 provides a ligand contact to substrate; the sequence is SPE. ATP contacts are provided by residues 100-102 and asparagine 109; that span reads RNE. Tyrosine 118 provides a ligand contact to substrate. Position 244-245 (244-245) interacts with ATP; that stretch reads EL. A substrate-binding site is contributed by glutamate 251. Glycine 300 contacts ATP.

The protein belongs to the class-II aminoacyl-tRNA synthetase family. EpmA subfamily. Homodimer.

It carries out the reaction D-beta-lysine + L-lysyl-[protein] + ATP = N(6)-((3R)-3,6-diaminohexanoyl)-L-lysyl-[protein] + AMP + diphosphate + H(+). Its function is as follows. With EpmB is involved in the beta-lysylation step of the post-translational modification of translation elongation factor P (EF-P). Catalyzes the ATP-dependent activation of (R)-beta-lysine produced by EpmB, forming a lysyl-adenylate, from which the beta-lysyl moiety is then transferred to the epsilon-amino group of a conserved specific lysine residue in EF-P. The polypeptide is Elongation factor P--(R)-beta-lysine ligase (Yersinia enterocolitica serotype O:8 / biotype 1B (strain NCTC 13174 / 8081)).